The following is a 375-amino-acid chain: ORC1-type DNA replication protein 3 (375 aa).

Residues 66-70, Tyr209, and Arg221 contribute to the ATP site; that span reads TGKTT.

It belongs to the CDC6/cdc18 family.

Functionally, involved in regulation of DNA replication. In Haloarcula marismortui (strain ATCC 43049 / DSM 3752 / JCM 8966 / VKM B-1809) (Halobacterium marismortui), this protein is ORC1-type DNA replication protein 3 (cdc6c).